The chain runs to 136 residues: uncharacterized protein (136 aa).

Residues 7-27 traverse the membrane as a helical segment; sequence ANVLAILLVSLFLINGLVFLS.

Its subcellular location is the membrane. This is an uncharacterized protein from Mycoplasma pneumoniae (strain ATCC 29342 / M129 / Subtype 1) (Mycoplasmoides pneumoniae).